The primary structure comprises 98 residues: Small ribosomal subunit protein bS20 (98 aa).

Residues 1-15 show a composition bias toward basic residues; that stretch reads MAPKKTTKKGGPKKR. The disordered stretch occupies residues 1-21; it reads MAPKKTTKKGGPKKRPSAEKR.

Belongs to the bacterial ribosomal protein bS20 family.

In terms of biological role, binds directly to 16S ribosomal RNA. This is Small ribosomal subunit protein bS20 from Chlamydia abortus (strain DSM 27085 / S26/3) (Chlamydophila abortus).